The chain runs to 373 residues: Ferroptosis suppressor protein 1 (373 aa).

Gly2 is lipidated: N-myristoyl glycine. A helical membrane pass occupies residues 13 to 29; that stretch reads VVVVGGGFGGTAAASLL. Residues 17–21, Arg53, and Val81 each bind 6-hydroxy-FAD; that span reads GGGFG. Lys167 carries the post-translational modification N6-acetyllysine. Residue Asp284 participates in 6-hydroxy-FAD binding.

This sequence belongs to the FAD-dependent oxidoreductase family. Requires 6-hydroxy-FAD as cofactor. In terms of processing, N-myristoylation at Gly-2 mediates the recruitment to lipid droplets and plasma membrane. Post-translationally, acetylation at Lys-167 prevents AIFM2 ubiquitination and degradation, thereby inhibiting ferroptosis. KAT2B mediates acetylation at Lys-167, while HDAC3 removes it. Ubiquitinated. AIFM2 undergoes 'Lys-29'-ubiquitination and proteasomal degradation, which is inhibited by acetylation at Lys-167.

The protein localises to the lipid droplet. It localises to the cell membrane. The protein resides in the cytoplasm. Its subcellular location is the mitochondrion membrane. It is found in the nucleus. It catalyses the reaction ubiquinone-10 + NADH + H(+) = ubiquinol-10 + NAD(+). The catalysed reaction is phylloquinone + NADH + H(+) = phylloquinol + NAD(+). It carries out the reaction menaquinone-4 + NADH + H(+) = menaquinol-4 + NAD(+). The enzyme catalyses menadione + NADH + H(+) = menadiol + NAD(+). The modification by 4-hydroxy-2-nonenal (HNE) adduction in mitochondria results in loss of the oxidoreductase activity and activation of a novel function in mitochondrial oxidative stress signaling. In terms of biological role, a NAD(P)H-dependent oxidoreductase that acts as a key inhibitor of ferroptosis. At the plasma membrane, catalyzes reduction of coenzyme Q/ubiquinone-10 to ubiquinol-10, a lipophilic radical-trapping antioxidant that prevents lipid oxidative damage and consequently ferroptosis. Acts in parallel to GPX4 to suppress phospholipid peroxidation and ferroptosis. This anti-ferroptotic function is independent of cellular glutathione levels. Also acts as a potent radical-trapping antioxidant by mediating warfarin-resistant vitamin K reduction in the canonical vitamin K cycle: catalyzes NAD(P)H-dependent reduction of vitamin K (phylloquinone, menaquinone-4 and menadione) to hydroquinone forms. Hydroquinones act as potent radical-trapping antioxidants inhibitor of phospholipid peroxidation and ferroptosis. May play a role in mitochondrial stress signaling. Upon oxidative stress, associates with the lipid peroxidation end product 4-hydroxy-2-nonenal (HNE) forming a lipid adduct devoid of oxidoreductase activity, which then translocates from mitochondria into the nucleus triggering DNA damage and cell death. In Taeniopygia guttata (Zebra finch), this protein is Ferroptosis suppressor protein 1 (AIFM2).